The sequence spans 194 residues: MQVILLERIDRLGKIGDEVRVKNGFARNFLIPQGKALIANDKNRKRFEIERDAIEARNAAARDAAQTEADNLEGAIFVLIRQAGETGQLYGSVTARDVAEAAEAAGYKVDRAAVRLDKPIKAVGLSEVSVRLHAEVSVKVQVNVARSTEEAERQEKGEDIVAALQAENQAQADEQAGELAAAAAERGDMGGDEE.

Residues 166 to 184 (AENQAQADEQAGELAAAAA) are compositionally biased toward low complexity. The tract at residues 166-194 (AENQAQADEQAGELAAAAAERGDMGGDEE) is disordered. Over residues 185–194 (ERGDMGGDEE) the composition is skewed to basic and acidic residues.

It belongs to the bacterial ribosomal protein bL9 family.

In terms of biological role, binds to the 23S rRNA. The chain is Large ribosomal subunit protein bL9 from Hyphomonas neptunium (strain ATCC 15444).